The following is a 373-amino-acid chain: Putative protein YfkA (373 aa).

The region spanning 26–256 is the Radical SAM core domain; it reads YGDMQLTNVE…DIRDENTWML (231 aa). 3 residues coordinate [4Fe-4S] cluster: Cys-42, Cys-46, and Cys-49.

It belongs to the radical SAM superfamily. It depends on [4Fe-4S] cluster as a cofactor.

The sequence is that of Putative protein YfkA (yfkA) from Bacillus subtilis (strain 168).